A 146-amino-acid polypeptide reads, in one-letter code: Large-conductance mechanosensitive channel (146 aa).

Helical transmembrane passes span 14-34 (VLDLAVGVVIGAAFNQIVNSL) and 81-101 (GLFLNNLLNFLIVAFAVFLLV).

Belongs to the MscL family. Homopentamer.

It localises to the cell membrane. Channel that opens in response to stretch forces in the membrane lipid bilayer. May participate in the regulation of osmotic pressure changes within the cell. The chain is Large-conductance mechanosensitive channel from Symbiobacterium thermophilum (strain DSM 24528 / JCM 14929 / IAM 14863 / T).